A 378-amino-acid chain; its full sequence is Phospho-N-acetylmuramoyl-pentapeptide-transferase (378 aa).

The next 10 membrane-spanning stretches (helical) occupy residues 27 to 47 (TAFA…WLIN), 74 to 94 (TMGG…WADL), 96 to 116 (YPYV…GFLD), 135 to 155 (LVYQ…MRAY), 184 to 204 (WTYV…VVFY), 216 to 236 (GLAI…AYAG), 256 to 276 (LTIF…YNAH), 280 to 300 (IFMG…VAVL), 305 to 325 (ILLL…ILQV), and 355 to 375 (KIIA…LTTL).

This sequence belongs to the glycosyltransferase 4 family. MraY subfamily. Mg(2+) is required as a cofactor.

Its subcellular location is the cell inner membrane. The catalysed reaction is UDP-N-acetyl-alpha-D-muramoyl-L-alanyl-gamma-D-glutamyl-meso-2,6-diaminopimeloyl-D-alanyl-D-alanine + di-trans,octa-cis-undecaprenyl phosphate = di-trans,octa-cis-undecaprenyl diphospho-N-acetyl-alpha-D-muramoyl-L-alanyl-D-glutamyl-meso-2,6-diaminopimeloyl-D-alanyl-D-alanine + UMP. Its pathway is cell wall biogenesis; peptidoglycan biosynthesis. Functionally, catalyzes the initial step of the lipid cycle reactions in the biosynthesis of the cell wall peptidoglycan: transfers peptidoglycan precursor phospho-MurNAc-pentapeptide from UDP-MurNAc-pentapeptide onto the lipid carrier undecaprenyl phosphate, yielding undecaprenyl-pyrophosphoryl-MurNAc-pentapeptide, known as lipid I. The polypeptide is Phospho-N-acetylmuramoyl-pentapeptide-transferase (Solibacter usitatus (strain Ellin6076)).